Consider the following 193-residue polypeptide: UPF0301 protein SCO2948 (193 aa).

The protein belongs to the UPF0301 (AlgH) family.

This Streptomyces coelicolor (strain ATCC BAA-471 / A3(2) / M145) protein is UPF0301 protein SCO2948.